Here is a 447-residue protein sequence, read N- to C-terminus: RNA-binding protein 208 (447 aa).

2 RRM domains span residues 73–147 and 158–236; these read RSVY…WAYA and FHIF…WATK. Over residues 254–269 the composition is skewed to polar residues; the sequence is TNGSSSNPGMEASQDT. 2 disordered regions span residues 254–279 and 353–372; these read TNGS…ENNP and WGNK…PPLP. The region spanning 282–356 is the RRM 3 domain; the sequence is TTVYVGNLGH…KPIKCSWGNK (75 aa).

In terms of assembly, interacts with RBP-P.

Functionally, RNA-binding protein. This chain is RNA-binding protein 208, found in Oryza sativa subsp. japonica (Rice).